The sequence spans 194 residues: Large ribosomal subunit protein eL15 (194 aa).

The segment at 160–194 (RGLTSAGKKGRGLMYKGKGTEKVRPSVRANSKKAK) is disordered.

It belongs to the eukaryotic ribosomal protein eL15 family.

In Methanococcus maripaludis (strain C7 / ATCC BAA-1331), this protein is Large ribosomal subunit protein eL15.